The sequence spans 306 residues: D-alanine--D-alanine ligase (306 aa).

In terms of domain architecture, ATP-grasp spans 101 to 303 (KLLWQGAGLP…FSQLVVRILE (203 aa)). ATP is bound at residue 134-189 (ISALGLPLIVKPSREGSSVGMTKVVEENALQGALSLAFQHDDEILIEKWLCGPEFT). The Mg(2+) site is built by Asp-257, Glu-270, and Asn-272.

It belongs to the D-alanine--D-alanine ligase family. Mg(2+) is required as a cofactor. It depends on Mn(2+) as a cofactor.

Its subcellular location is the cytoplasm. The catalysed reaction is 2 D-alanine + ATP = D-alanyl-D-alanine + ADP + phosphate + H(+). Its pathway is cell wall biogenesis; peptidoglycan biosynthesis. Its function is as follows. Cell wall formation. This chain is D-alanine--D-alanine ligase, found in Salmonella paratyphi A (strain ATCC 9150 / SARB42).